The primary structure comprises 264 residues: Hydroxyethylthiazole kinase (264 aa).

Methionine 45 lines the substrate pocket. ATP-binding residues include arginine 121 and serine 167. Glycine 194 contacts substrate.

It belongs to the Thz kinase family. The cofactor is Mg(2+).

The catalysed reaction is 5-(2-hydroxyethyl)-4-methylthiazole + ATP = 4-methyl-5-(2-phosphooxyethyl)-thiazole + ADP + H(+). It functions in the pathway cofactor biosynthesis; thiamine diphosphate biosynthesis; 4-methyl-5-(2-phosphoethyl)-thiazole from 5-(2-hydroxyethyl)-4-methylthiazole: step 1/1. Catalyzes the phosphorylation of the hydroxyl group of 4-methyl-5-beta-hydroxyethylthiazole (THZ). In Aliivibrio salmonicida (strain LFI1238) (Vibrio salmonicida (strain LFI1238)), this protein is Hydroxyethylthiazole kinase.